Here is a 463-residue protein sequence, read N- to C-terminus: ATP synthase subunit beta (463 aa).

An ATP-binding site is contributed by 151–158 (GGAGVGKT).

Belongs to the ATPase alpha/beta chains family. F-type ATPases have 2 components, CF(1) - the catalytic core - and CF(0) - the membrane proton channel. CF(1) has five subunits: alpha(3), beta(3), gamma(1), delta(1), epsilon(1). CF(0) has three main subunits: a(1), b(2) and c(9-12). The alpha and beta chains form an alternating ring which encloses part of the gamma chain. CF(1) is attached to CF(0) by a central stalk formed by the gamma and epsilon chains, while a peripheral stalk is formed by the delta and b chains.

The protein resides in the cell membrane. The catalysed reaction is ATP + H2O + 4 H(+)(in) = ADP + phosphate + 5 H(+)(out). Produces ATP from ADP in the presence of a proton gradient across the membrane. The catalytic sites are hosted primarily by the beta subunits. This is ATP synthase subunit beta from Clostridium botulinum (strain ATCC 19397 / Type A).